An 837-amino-acid chain; its full sequence is Protein translocase subunit SecA (837 aa).

ATP contacts are provided by residues Gln-85, 103-107 (GEGKT), and Asp-493. 4 residues coordinate Zn(2+): Cys-821, Cys-823, Cys-832, and His-833.

The protein belongs to the SecA family. In terms of assembly, monomer and homodimer. Part of the essential Sec protein translocation apparatus which comprises SecA, SecYEG and auxiliary proteins SecDF. Other proteins may also be involved. Zn(2+) serves as cofactor.

The protein localises to the cell membrane. It localises to the cytoplasm. It catalyses the reaction ATP + H2O + cellular proteinSide 1 = ADP + phosphate + cellular proteinSide 2.. In terms of biological role, part of the Sec protein translocase complex. Interacts with the SecYEG preprotein conducting channel. Has a central role in coupling the hydrolysis of ATP to the transfer of proteins into and across the cell membrane, serving as an ATP-driven molecular motor driving the stepwise translocation of polypeptide chains across the membrane. The chain is Protein translocase subunit SecA from Streptococcus pneumoniae serotype 19F (strain G54).